Reading from the N-terminus, the 462-residue chain is Bifunctional protein GlmU (462 aa).

Residues Met1–Arg230 are pyrophosphorylase. Residues Leu9–Gly12, Lys23, Gln73, Gly78–Thr79, Ser101–Asp103, Gly140, Glu155, Asn170, and Asn228 contribute to the UDP-N-acetyl-alpha-D-glucosamine site. Asp103 contributes to the Mg(2+) binding site. Mg(2+) is bound at residue Asn228. A linker region spans residues Val231–Asn251. Residues Gly252–Gln462 are N-acetyltransferase. Positions 333 and 351 each coordinate UDP-N-acetyl-alpha-D-glucosamine. His363 functions as the Proton acceptor in the catalytic mechanism. Tyr366 and Asn377 together coordinate UDP-N-acetyl-alpha-D-glucosamine. Residues Asn386–Tyr387, Ser405, Ala423, and Arg440 each bind acetyl-CoA.

The protein in the N-terminal section; belongs to the N-acetylglucosamine-1-phosphate uridyltransferase family. It in the C-terminal section; belongs to the transferase hexapeptide repeat family. As to quaternary structure, homotrimer. Mg(2+) serves as cofactor.

Its subcellular location is the cytoplasm. It catalyses the reaction alpha-D-glucosamine 1-phosphate + acetyl-CoA = N-acetyl-alpha-D-glucosamine 1-phosphate + CoA + H(+). The enzyme catalyses N-acetyl-alpha-D-glucosamine 1-phosphate + UTP + H(+) = UDP-N-acetyl-alpha-D-glucosamine + diphosphate. The protein operates within nucleotide-sugar biosynthesis; UDP-N-acetyl-alpha-D-glucosamine biosynthesis; N-acetyl-alpha-D-glucosamine 1-phosphate from alpha-D-glucosamine 6-phosphate (route II): step 2/2. Its pathway is nucleotide-sugar biosynthesis; UDP-N-acetyl-alpha-D-glucosamine biosynthesis; UDP-N-acetyl-alpha-D-glucosamine from N-acetyl-alpha-D-glucosamine 1-phosphate: step 1/1. It functions in the pathway bacterial outer membrane biogenesis; LPS lipid A biosynthesis. Functionally, catalyzes the last two sequential reactions in the de novo biosynthetic pathway for UDP-N-acetylglucosamine (UDP-GlcNAc). The C-terminal domain catalyzes the transfer of acetyl group from acetyl coenzyme A to glucosamine-1-phosphate (GlcN-1-P) to produce N-acetylglucosamine-1-phosphate (GlcNAc-1-P), which is converted into UDP-GlcNAc by the transfer of uridine 5-monophosphate (from uridine 5-triphosphate), a reaction catalyzed by the N-terminal domain. This chain is Bifunctional protein GlmU, found in Latilactobacillus sakei subsp. sakei (strain 23K) (Lactobacillus sakei subsp. sakei).